Reading from the N-terminus, the 366-residue chain is Photosynthetic reaction center cytochrome c subunit (366 aa).

The first 22 residues, 1–22, serve as a signal peptide directing secretion; the sequence is MALAVRISTLTVAVTAAALLAG. The N-palmitoyl cysteine moiety is linked to residue cysteine 23. Cysteine 23 is lipidated: S-diacylglycerol cysteine. Residues methionine 94, cysteine 107, cysteine 110, histidine 111, methionine 129, histidine 143, cysteine 151, cysteine 154, histidine 155, methionine 238, cysteine 249, cysteine 252, histidine 253, cysteine 309, cysteine 312, and histidine 313 each coordinate heme.

In terms of assembly, component of the photosynthetic reaction center composed of protein subunits L (PufL), M (PufM), H (PuhA) and cytochrome C (PufC). The reaction center interacts with light-harvesting antenna complex LH1. Binds 4 heme groups per subunit.

It localises to the cellular chromatophore membrane. The reaction center of purple bacteria contains a tightly bound cytochrome molecule which re-reduces the photo oxidized primary electron donor. The chain is Photosynthetic reaction center cytochrome c subunit (pufC) from Rubrivivax gelatinosus (strain NBRC 100245 / IL144).